The sequence spans 333 residues: Sodium/bile acid cotransporter 7 (333 aa).

Residues 1 to 10 (MGLLERLRKE) are Cytoplasmic-facing. A helical transmembrane segment spans residues 11-31 (WFIAGIALVIAAARLEPAVGV). Residues 32–37 (KGGPLK) are Extracellular-facing. Residues 38 to 58 (PEITITYIAVSAIFFNSGLSL) traverse the membrane as a helical segment. The Cytoplasmic portion of the chain corresponds to 59–71 (KTEELTSALMHVK). The helical transmembrane segment at 72 to 92 (LHLFVQIFTLVFFPTAIWLFL) threads the bilayer. Residues 93-103 (QLLSITPINEW) are Extracellular-facing. The chain crosses the membrane as a helical span at residues 104 to 124 (LLKGLQTVGCMPPPVSSAVIL). Over 125 to 126 (TK) the chain is Cytoplasmic. A helical membrane pass occupies residues 127–147 (AVGGNEAAAIFNSAFGSFLLG). Over 148-151 (SSSS) the chain is Extracellular. The chain crosses the membrane as a helical span at residues 152–172 (VPFTSIFSQLFMTVVVPLIIG). Topologically, residues 173–189 (QIVRRYIKDWLERRKPP) are cytoplasmic. Residues 190 to 210 (FGTISSCVLLMIIYTTFCDTF) traverse the membrane as a helical segment. Over 211–222 (ANPNIDLDKFSL) the chain is Extracellular. The chain crosses the membrane as a helical span at residues 223-243 (IIIVFIIFSVQMSFMFLTFLF). At 244 to 258 (STRSNSGFTPADTVA) the chain is on the cytoplasmic side. The helical transmembrane segment at 259-279 (IIFCSTHKSLTLGIPMLKIVF) threads the bilayer. Over 280-286 (AGYEHLS) the chain is Extracellular. Residues 287 to 307 (LISVPLLIYHPAQILLGSLLV) form a helical membrane-spanning segment. At 308–333 (PTIKSWMVSRQKALKLTRQPKVPVKV) the chain is on the cytoplasmic side.

Belongs to the bile acid:sodium symporter (BASS) (TC 2.A.28) family.

The protein localises to the cell membrane. The protein resides in the endoplasmic reticulum membrane. Its subcellular location is the golgi apparatus membrane. Functionally, involved in teeth and skeletal development. Has an essential role in the biosynthesis and trafficking of glycosaminoglycans and glycoproteins to produce a proper functioning extracellular matrix. Required for extracellular matrix mineralization. Also involved in the regulation of cellular calcium homeostasis. Does not show transport activity towards bile acids or steroid sulfates. This is Sodium/bile acid cotransporter 7 (SLC10A7) from Gallus gallus (Chicken).